The chain runs to 543 residues: Probable protein kinase UbiB (543 aa).

The Protein kinase domain maps to 123–501; it reads DFDSQALASA…QQRQGQSRYL (379 aa). Residues 129 to 137 and Lys-152 contribute to the ATP site; that span reads LASASIAQV. The active-site Proton acceptor is Asp-287. The helical transmembrane segment at 517-539 threads the bilayer; that stretch reads LADATEVSTGFIVAGALAWFIGW.

Belongs to the ABC1 family. UbiB subfamily.

It is found in the cell inner membrane. It participates in cofactor biosynthesis; ubiquinone biosynthesis [regulation]. Functionally, is probably a protein kinase regulator of UbiI activity which is involved in aerobic coenzyme Q (ubiquinone) biosynthesis. The protein is Probable protein kinase UbiB of Yersinia pseudotuberculosis serotype O:1b (strain IP 31758).